The following is a 347-amino-acid chain: UDP-3-O-acylglucosamine N-acyltransferase (347 aa).

The active-site Proton acceptor is histidine 241.

Belongs to the transferase hexapeptide repeat family. LpxD subfamily. As to quaternary structure, homotrimer.

It catalyses the reaction a UDP-3-O-[(3R)-3-hydroxyacyl]-alpha-D-glucosamine + a (3R)-hydroxyacyl-[ACP] = a UDP-2-N,3-O-bis[(3R)-3-hydroxyacyl]-alpha-D-glucosamine + holo-[ACP] + H(+). It functions in the pathway bacterial outer membrane biogenesis; LPS lipid A biosynthesis. Catalyzes the N-acylation of UDP-3-O-acylglucosamine using 3-hydroxyacyl-ACP as the acyl donor. Is involved in the biosynthesis of lipid A, a phosphorylated glycolipid that anchors the lipopolysaccharide to the outer membrane of the cell. The protein is UDP-3-O-acylglucosamine N-acyltransferase of Neisseria meningitidis serogroup A / serotype 4A (strain DSM 15465 / Z2491).